Here is a 411-residue protein sequence, read N- to C-terminus: Snake venom metalloproteinase VMP1 (411 aa).

Positions 1–20 (MIQVLLVTICLAAFPYQGSS) are cleaved as a signal peptide. A propeptide spanning residues 21 to 189 (IILESGNVND…KKAFQLNLTP (169 aa)) is cleaved from the precursor. Residues 197–393 (RYVELVIIAD…KNPQCILNKP (197 aa)) form the Peptidase M12B domain. Ca(2+) is bound by residues Glu-200 and Asp-284. 3 disulfides stabilise this stretch: Cys-308-Cys-388, Cys-348-Cys-372, and Cys-350-Cys-355. N-linked (GlcNAc...) asparagine glycosylation occurs at Asn-311. His-333 is a binding site for Zn(2+). Glu-334 is an active-site residue. The Zn(2+) site is built by His-337 and His-343. Positions 388, 391, 403, 406, 408, and 410 each coordinate Ca(2+).

The protein belongs to the venom metalloproteinase (M12B) family. P-I subfamily. Monomer. Zn(2+) serves as cofactor. As to expression, expressed by the venom gland.

It localises to the secreted. Its activity is regulated as follows. Inhibited by EDTA and 1,10-phenanthroline, but not by PMSF. Functionally, this venom zinc protease has fibrinolytic activity. The recombinant enzyme cleaves both alpha- (FGA) and beta-chains (FGB) of fibrinogen, but not the gamma-chain. The recombinant protein does not produce hemorrhage in mice and does not have effect on ADP- or collagen-stimulated platelet aggregation. This is Snake venom metalloproteinase VMP1 from Agkistrodon piscivorus leucostoma (Western cottonmouth).